The following is a 407-amino-acid chain: Tryptophan synthase beta chain (407 aa).

Lysine 91 carries the post-translational modification N6-(pyridoxal phosphate)lysine.

It belongs to the TrpB family. As to quaternary structure, tetramer of two alpha and two beta chains. Pyridoxal 5'-phosphate is required as a cofactor.

The enzyme catalyses (1S,2R)-1-C-(indol-3-yl)glycerol 3-phosphate + L-serine = D-glyceraldehyde 3-phosphate + L-tryptophan + H2O. Its pathway is amino-acid biosynthesis; L-tryptophan biosynthesis; L-tryptophan from chorismate: step 5/5. The beta subunit is responsible for the synthesis of L-tryptophan from indole and L-serine. This Streptococcus pneumoniae (strain JJA) protein is Tryptophan synthase beta chain.